Consider the following 420-residue polypeptide: Serine hydroxymethyltransferase (420 aa).

Residues Leu-121 and 125-127 (GHL) each bind (6S)-5,6,7,8-tetrahydrofolate. The residue at position 230 (Lys-230) is an N6-(pyridoxal phosphate)lysine. Residues Glu-246 and 354–356 (SPF) each bind (6S)-5,6,7,8-tetrahydrofolate.

It belongs to the SHMT family. In terms of assembly, homodimer. It depends on pyridoxal 5'-phosphate as a cofactor.

It localises to the cytoplasm. It carries out the reaction (6R)-5,10-methylene-5,6,7,8-tetrahydrofolate + glycine + H2O = (6S)-5,6,7,8-tetrahydrofolate + L-serine. Its pathway is one-carbon metabolism; tetrahydrofolate interconversion. It participates in amino-acid biosynthesis; glycine biosynthesis; glycine from L-serine: step 1/1. In terms of biological role, catalyzes the reversible interconversion of serine and glycine with tetrahydrofolate (THF) serving as the one-carbon carrier. This reaction serves as the major source of one-carbon groups required for the biosynthesis of purines, thymidylate, methionine, and other important biomolecules. Also exhibits THF-independent aldolase activity toward beta-hydroxyamino acids, producing glycine and aldehydes, via a retro-aldol mechanism. The polypeptide is Serine hydroxymethyltransferase (Rickettsia akari (strain Hartford)).